The sequence spans 517 residues: GMP synthase [glutamine-hydrolyzing] (517 aa).

The Glutamine amidotransferase type-1 domain maps to 11–202 (KIIVLDYGSQ…AFGVCGAQDN (192 aa)). Residue Cys-88 is the Nucleophile of the active site. Catalysis depends on residues His-176 and Glu-178. The GMPS ATP-PPase domain occupies 203 to 392 (WTMNDFIDMQ…LGMPYELVWR (190 aa)). 230-236 (SGGVDSS) contributes to the ATP binding site.

As to quaternary structure, homodimer.

The enzyme catalyses XMP + L-glutamine + ATP + H2O = GMP + L-glutamate + AMP + diphosphate + 2 H(+). Its pathway is purine metabolism; GMP biosynthesis; GMP from XMP (L-Gln route): step 1/1. Functionally, catalyzes the synthesis of GMP from XMP. This chain is GMP synthase [glutamine-hydrolyzing], found in Latilactobacillus sakei subsp. sakei (strain 23K) (Lactobacillus sakei subsp. sakei).